Reading from the N-terminus, the 51-residue chain is Large ribosomal subunit protein bL33 (51 aa).

The protein belongs to the bacterial ribosomal protein bL33 family.

The polypeptide is Large ribosomal subunit protein bL33 (Alteromonas mediterranea (strain DSM 17117 / CIP 110805 / LMG 28347 / Deep ecotype)).